A 381-amino-acid polypeptide reads, in one-letter code: Alkanesulfonate monooxygenase (381 aa).

The protein belongs to the SsuD family. In terms of assembly, homotetramer.

It carries out the reaction an alkanesulfonate + FMNH2 + O2 = an aldehyde + FMN + sulfite + H2O + 2 H(+). Catalyzes the desulfonation of aliphatic sulfonates. The chain is Alkanesulfonate monooxygenase from Escherichia coli O17:K52:H18 (strain UMN026 / ExPEC).